The following is a 55-amino-acid chain: Neurotoxin B-II (55 aa).

Residue Pro10 is modified to Hydroxyproline. Intrachain disulfides connect Cys12–Cys48, Cys16–Cys52, Cys23–Cys41, and Cys26–Cys37.

This sequence belongs to the worm B-toxin family.

Its subcellular location is the secreted. This toxin increases the excitability of nerves by delaying the inactivation of the voltage-gated sodium channel (Nav). Only acts on some crustacean. Neurotoxin B-II is less abundant, but 15-fold more toxic than neurotoxin B-VI. In Cerebratulus lacteus (Milky ribbon worm), this protein is Neurotoxin B-II.